The primary structure comprises 409 residues: MTQTNFRSGPDVNGLFGSFGGRYVAETLMPLVLDLNREYEAAKADPEFAKEMAYFQRDYVGRPNPLYFAERLTEFCDGAKIYFKREELNHTGAHKINNCIGQVLLAKRMGKKRLIAETGAGMHGVATATVAARFGLPCVIYMGATDIERQQANVFRMKLLGAEIVPVTSGTGTLKDAMNEALRDWVTNVDDTFYLIGTVAGPHPYPAMVRDFQAIIGKETKEQMQEKEGRLPDSLIACVGGGSNAMGLFHPFLDDASVEIIGVEAGGHGVDTDKHAASLNGGVPGVLHGNRTYLLQDGDGQITDPHSISAGLDYPGIGPEHAFLHEVKRVEYVSITDDEALDAFHQCCLLEGIIPALETAHALAEAMKRATNLRDDHLMVVCLSGRGDKDMQTVMNHMAAAEKTQEKLV.

At K95 the chain carries N6-(pyridoxal phosphate)lysine.

It belongs to the TrpB family. In terms of assembly, tetramer of two alpha and two beta chains. Pyridoxal 5'-phosphate serves as cofactor.

It catalyses the reaction (1S,2R)-1-C-(indol-3-yl)glycerol 3-phosphate + L-serine = D-glyceraldehyde 3-phosphate + L-tryptophan + H2O. Its pathway is amino-acid biosynthesis; L-tryptophan biosynthesis; L-tryptophan from chorismate: step 5/5. The beta subunit is responsible for the synthesis of L-tryptophan from indole and L-serine. In Pseudomonas savastanoi pv. phaseolicola (Pseudomonas syringae pv. phaseolicola), this protein is Tryptophan synthase beta chain.